Consider the following 493-residue polypeptide: Glutamate--tRNA ligase (493 aa).

The 'HIGH' region motif lies at 10–20 (PSPTGDPHVGT). Residues 251–255 (KLSKR) carry the 'KMSKS' region motif. Lys254 lines the ATP pocket.

Belongs to the class-I aminoacyl-tRNA synthetase family. Glutamate--tRNA ligase type 1 subfamily. Monomer.

The protein resides in the cytoplasm. The catalysed reaction is tRNA(Glu) + L-glutamate + ATP = L-glutamyl-tRNA(Glu) + AMP + diphosphate. Functionally, catalyzes the attachment of glutamate to tRNA(Glu) in a two-step reaction: glutamate is first activated by ATP to form Glu-AMP and then transferred to the acceptor end of tRNA(Glu). The polypeptide is Glutamate--tRNA ligase (Pseudomonas savastanoi pv. phaseolicola (strain 1448A / Race 6) (Pseudomonas syringae pv. phaseolicola (strain 1448A / Race 6))).